A 209-amino-acid polypeptide reads, in one-letter code: Molybdenum cofactor guanylyltransferase (209 aa).

GTP contacts are provided by residues 16–18, Lys-28, Asn-56, Asp-69, and Asp-103; that span reads LAG. Residue Asp-103 coordinates Mg(2+).

Belongs to the MobA family. As to quaternary structure, monomer. Requires Mg(2+) as cofactor.

It is found in the cytoplasm. The catalysed reaction is Mo-molybdopterin + GTP + H(+) = Mo-molybdopterin guanine dinucleotide + diphosphate. Functionally, transfers a GMP moiety from GTP to Mo-molybdopterin (Mo-MPT) cofactor (Moco or molybdenum cofactor) to form Mo-molybdopterin guanine dinucleotide (Mo-MGD) cofactor. In Rhizobium leguminosarum bv. trifolii (strain WSM2304), this protein is Molybdenum cofactor guanylyltransferase.